The following is a 734-amino-acid chain: 1,4-alpha-glucan branching enzyme GlgB (734 aa).

The active-site Nucleophile is the Asp-417. Glu-470 functions as the Proton donor in the catalytic mechanism.

The protein belongs to the glycosyl hydrolase 13 family. GlgB subfamily. Monomer.

The enzyme catalyses Transfers a segment of a (1-&gt;4)-alpha-D-glucan chain to a primary hydroxy group in a similar glucan chain.. It participates in glycan biosynthesis; glycogen biosynthesis. Its function is as follows. Catalyzes the formation of the alpha-1,6-glucosidic linkages in glycogen by scission of a 1,4-alpha-linked oligosaccharide from growing alpha-1,4-glucan chains and the subsequent attachment of the oligosaccharide to the alpha-1,6 position. This Rhizobium radiobacter (Agrobacterium tumefaciens) protein is 1,4-alpha-glucan branching enzyme GlgB (glgB).